The chain runs to 288 residues: MAGAKEIRNKIGSVKNTQKITGAMEMVAASKMRRAQDRMSASRPYAETMRKVIGHIAQGNLEYKHPYLIEREVKRVGYIVVSTDRGLCGGLNINLFKAALNDMKQWSAKGAKVDLALIGNKASNFFERHGAKVKAHVAGLGDNPSVNDLIGSVKVMLKAYDNGEIDRLYLVYNKFVNTMVQQPRVDQLLPLPVTEDSKLAKKHHWDYLYEPDPKQLLDTLLIRYVESQVYQGVVENLASEQAARMVAMQAATDNAGNLINDLQLVYNKARQASITQELTEIVSGAAAV.

This sequence belongs to the ATPase gamma chain family. As to quaternary structure, F-type ATPases have 2 components, CF(1) - the catalytic core - and CF(0) - the membrane proton channel. CF(1) has five subunits: alpha(3), beta(3), gamma(1), delta(1), epsilon(1). CF(0) has three main subunits: a, b and c.

Its subcellular location is the cell inner membrane. Functionally, produces ATP from ADP in the presence of a proton gradient across the membrane. The gamma chain is believed to be important in regulating ATPase activity and the flow of protons through the CF(0) complex. This is ATP synthase gamma chain from Aeromonas hydrophila subsp. hydrophila (strain ATCC 7966 / DSM 30187 / BCRC 13018 / CCUG 14551 / JCM 1027 / KCTC 2358 / NCIMB 9240 / NCTC 8049).